Consider the following 642-residue polypeptide: Pheromone-processing carboxypeptidase KEX1 (642 aa).

Residues 1-19 (MSLWLFFVQTVLLIQCALG) form the signal peptide. Topologically, residues 20–544 (GLPNAKDYLV…HKDRHRNSDK (525 aa)) are lumenal. Asparagine 80 is a glycosylation site (N-linked (GlcNAc...) asparagine). Catalysis depends on residues serine 189 and aspartate 406. N-linked (GlcNAc...) asparagine glycosylation is found at asparagine 425, asparagine 459, and asparagine 467. Histidine 470 is a catalytic residue. The tract at residues 515–539 (HSTGEEELSADQKQDEDENSHKDRH) is disordered. Residues 519-532 (EEELSADQKQDEDE) show a composition bias toward acidic residues. The chain crosses the membrane as a helical span at residues 545 to 565 (FEIAVILLVVFSITGTIAYYF). Topologically, residues 566–642 (LRERFRKQIH…DDDSFELDNL (77 aa)) are cytoplasmic. Residues 609–642 (IDEAPSTADKPAKNKSGYTKVPNTDDDSFELDNL) form a disordered region. The span at 632–642 (TDDDSFELDNL) shows a compositional bias: acidic residues.

It belongs to the peptidase S10 family.

The protein resides in the golgi apparatus. It is found in the trans-Golgi network membrane. The catalysed reaction is Preferential release of a C-terminal arginine or lysine residue.. In terms of biological role, protease with a carboxypeptidase B-like function involved in the C-terminal processing of the lysine and arginine residues from protein precursors. Promotes cell fusion and is involved in the programmed cell death. The protein is Pheromone-processing carboxypeptidase KEX1 (KEX1) of Kluyveromyces lactis (strain ATCC 8585 / CBS 2359 / DSM 70799 / NBRC 1267 / NRRL Y-1140 / WM37) (Yeast).